The chain runs to 618 residues: 25S rRNA (cytosine(2870)-C(5))-methyltransferase (618 aa).

The disordered stretch occupies residues 1–132 (MGSRRHKNKQ…NDAHPIFSDD (132 aa)). A compositionally biased stretch (basic residues) spans 48–59 (RKKKKSKPFKKS). Positions 64-79 (EEVVEEDKDLPEVDLE) are enriched in acidic residues. Residues 80 to 89 (ELSKARKSLF) are compositionally biased toward basic and acidic residues. A compositionally biased stretch (acidic residues) spans 90-123 (DDEEDDDEAGLVDEELKDEFDLEQEYDYDEDEDN). S-adenosyl-L-methionine-binding positions include 353–359 (AAAPGGK), D377, D404, and D421. The active-site Nucleophile is the C478. S580 carries the phosphoserine modification.

Belongs to the class I-like SAM-binding methyltransferase superfamily. RsmB/NOP family. Interacts with NOP53. Interacts with TRM112.

The protein localises to the nucleus. Its subcellular location is the nucleolus. The enzyme catalyses cytidine(2870) in 25S rRNA + S-adenosyl-L-methionine = 5-methylcytidine(2870) in 25S rRNA + S-adenosyl-L-homocysteine + H(+). In terms of biological role, S-adenosyl-L-methionine-dependent methyltransferase that specifically methylates the C(5) position of cytosine 2870 (m5C2870) in 25S rRNA. Required for 60S ribosomal subunit synthesis and processing. This chain is 25S rRNA (cytosine(2870)-C(5))-methyltransferase (NOP2), found in Saccharomyces cerevisiae (strain ATCC 204508 / S288c) (Baker's yeast).